The chain runs to 230 residues: uncharacterized protein (230 aa).

6 consecutive transmembrane segments (helical) span residues 4 to 24 (ACIAIIIILLTVAAYLAMVKL), 30 to 50 (LPFLIPVLTTTILIVAALMMF), 67 to 87 (LLGPAVVALAYPLYKQWHIIV), 91 to 111 (VPILGGVLVGLCMGMISGLIF), 148 to 168 (MTVVFVMIAGFSGVILGPLFL), and 210 to 230 (MTLCAVLGSFFGPLVVWLFHI).

The protein belongs to the YohK (E.coli)/YwbG (IPA-22R) (B.subtilis) family.

Its subcellular location is the cell membrane. This is an uncharacterized protein from Bacillus subtilis (strain 168).